A 272-amino-acid polypeptide reads, in one-letter code: Dermonecrotic toxin LvSicTox-alphaIC1bii (272 aa).

The active site involves His-5. Residues Glu-25 and Asp-27 each contribute to the Mg(2+) site. His-41 serves as the catalytic Nucleophile. 2 disulfide bridges follow: Cys-45–Cys-51 and Cys-47–Cys-189. Asp-84 lines the Mg(2+) pocket.

The protein belongs to the arthropod phospholipase D family. Class II subfamily. The cofactor is Mg(2+). In terms of tissue distribution, expressed by the venom gland.

The protein localises to the secreted. The enzyme catalyses an N-(acyl)-sphingosylphosphocholine = an N-(acyl)-sphingosyl-1,3-cyclic phosphate + choline. It catalyses the reaction an N-(acyl)-sphingosylphosphoethanolamine = an N-(acyl)-sphingosyl-1,3-cyclic phosphate + ethanolamine. It carries out the reaction a 1-acyl-sn-glycero-3-phosphocholine = a 1-acyl-sn-glycero-2,3-cyclic phosphate + choline. The catalysed reaction is a 1-acyl-sn-glycero-3-phosphoethanolamine = a 1-acyl-sn-glycero-2,3-cyclic phosphate + ethanolamine. In terms of biological role, dermonecrotic toxins cleave the phosphodiester linkage between the phosphate and headgroup of certain phospholipids (sphingolipid and lysolipid substrates), forming an alcohol (often choline) and a cyclic phosphate. This toxin acts on sphingomyelin (SM). It may also act on ceramide phosphoethanolamine (CPE), lysophosphatidylcholine (LPC) and lysophosphatidylethanolamine (LPE), but not on lysophosphatidylserine (LPS), and lysophosphatidylglycerol (LPG). It acts by transphosphatidylation, releasing exclusively cyclic phosphate products as second products. Induces dermonecrosis, hemolysis, increased vascular permeability, edema, inflammatory response, and platelet aggregation. The chain is Dermonecrotic toxin LvSicTox-alphaIC1bii from Loxosceles variegata (Recluse spider).